The primary structure comprises 641 residues: WW domain-binding protein 11 (641 aa).

The segment covering 1–11 (MGRRSTSSTKS) has biased composition (polar residues). A disordered region spans residues 1–37 (MGRRSTSSTKSGKFMNPTDQARKEARKRELKKNKKQR). Residues 1–45 (MGRRSTSSTKSGKFMNPTDQARKEARKRELKKNKKQRMMVRAAVL) form a required for nuclear import region. K13 bears the N6-acetyllysine mark. Residues 28 to 37 (RELKKNKKQR) show a composition bias toward basic residues. Residues 75-133 (EKVLKDKRKKLRETFERILRLYEKENPDIYKELRKLEVEYEQKRAQLSQYFDAVKNAQH) adopt a coiled-coil conformation. Residue S181 is modified to Phosphoserine. A disordered region spans residues 188-213 (HGVPRLPPGRKPPGPPPGPPPPQVLQ). R192 carries the omega-N-methylarginine modification. The segment covering 192 to 210 (RLPPGRKPPGPPPGPPPPQ) has biased composition (pro residues). An interaction with PP1 region spans residues 217–221 (RKVGF). At Y236 the chain carries Phosphotyrosine. A disordered region spans residues 236-550 (YSPELAQRGH…IQRPKADDAS (315 aa)). At S237 the chain carries Phosphoserine. Over residues 253 to 263 (SEDDGYPEDMD) the composition is skewed to acidic residues. The span at 276 to 304 (TDRSDAESDGDEFGHREDSERDNTEEKKS) shows a compositional bias: basic and acidic residues. Residues S279 and S283 each carry the phosphoserine modification. The interaction with PP1 stretch occupies residues 306–310 (LSVRF). Residues 351-365 (EFSEEEDADDSDDSE) show a composition bias toward acidic residues. 3 positions are modified to phosphoserine: S353, S361, and S364. Positions 366-380 (AEKQSQKQHKDDGHS) are enriched in basic and acidic residues. A compositionally biased stretch (low complexity) spans 381-404 (DSTAAASSQQQAPPQSAPASQIQA). Composition is skewed to pro residues over residues 405–447 (PPMP…PPGM), 456–504 (RLLP…PPRP), and 510–530 (PLVP…PLPN). The short motif at 455 to 466 (PRLLPPGPPPGR) is the PGR element. K557 is covalently cross-linked (Glycyl lysine isopeptide (Lys-Gly) (interchain with G-Cter in SUMO2)). K565 carries the N6-acetyllysine modification. K572 participates in a covalent cross-link: Glycyl lysine isopeptide (Lys-Gly) (interchain with G-Cter in SUMO2). The tract at residues 588–620 (ENKGATAVPQRRSEDDSAVPVAKAAPRSGPSVA) is disordered. S600 bears the Phosphoserine mark. Residues 633 to 641 (FMKEMEGLL) form a required for nuclear export region.

Interacts via the PGR motif with PQBP1 in the nucleus. Interacts with the WW domains of WBP4. Interacts with PPP1CA, PPP1CB and PPP1CC. In terms of tissue distribution, ubiquitously expressed, with highest levels in testis.

The protein localises to the nucleus. The protein resides in the cytoplasm. Functionally, activates pre-mRNA splicing. May inhibit PP1 phosphatase activity. The polypeptide is WW domain-binding protein 11 (Wbp11) (Mus musculus (Mouse)).